The following is a 222-amino-acid chain: N-(5'-phosphoribosyl)anthranilate isomerase (222 aa).

It belongs to the TrpF family.

It catalyses the reaction N-(5-phospho-beta-D-ribosyl)anthranilate = 1-(2-carboxyphenylamino)-1-deoxy-D-ribulose 5-phosphate. It participates in amino-acid biosynthesis; L-tryptophan biosynthesis; L-tryptophan from chorismate: step 3/5. This is N-(5'-phosphoribosyl)anthranilate isomerase from Beijerinckia indica subsp. indica (strain ATCC 9039 / DSM 1715 / NCIMB 8712).